A 58-amino-acid chain; its full sequence is Protein translocase subunit SecE (58 aa).

Residues 36–56 (ILLIGFIGFLMFAIMSLLPGV) traverse the membrane as a helical segment.

This sequence belongs to the SecE/SEC61-gamma family. Component of the Sec protein translocase complex. Heterotrimer consisting of SecY (alpha), SecG (beta) and SecE (gamma) subunits. The heterotrimers can form oligomers, although 1 heterotrimer is thought to be able to translocate proteins. Interacts with the ribosome. May interact with SecDF, and other proteins may be involved.

The protein localises to the cell membrane. Functionally, essential subunit of the Sec protein translocation channel SecYEG. Clamps together the 2 halves of SecY. May contact the channel plug during translocation. In Halorubrum lacusprofundi (strain ATCC 49239 / DSM 5036 / JCM 8891 / ACAM 34), this protein is Protein translocase subunit SecE.